The chain runs to 407 residues: Argininosuccinate synthase (407 aa).

ATP is bound by residues 13–21 and A40; that span reads AYSGGLDTS. The L-citrulline site is built by Y91 and S96. G121 contributes to the ATP binding site. T123, N127, and D128 together coordinate L-aspartate. Residue N127 coordinates L-citrulline. Positions 131, 182, 191, 267, and 279 each coordinate L-citrulline.

This sequence belongs to the argininosuccinate synthase family. Type 1 subfamily. As to quaternary structure, homotetramer.

Its subcellular location is the cytoplasm. The enzyme catalyses L-citrulline + L-aspartate + ATP = 2-(N(omega)-L-arginino)succinate + AMP + diphosphate + H(+). The protein operates within amino-acid biosynthesis; L-arginine biosynthesis; L-arginine from L-ornithine and carbamoyl phosphate: step 2/3. In Bartonella bacilliformis (strain ATCC 35685 / KC583 / Herrer 020/F12,63), this protein is Argininosuccinate synthase.